We begin with the raw amino-acid sequence, 431 residues long: Gamma-glutamyl phosphate reductase (431 aa).

It belongs to the gamma-glutamyl phosphate reductase family.

The protein resides in the cytoplasm. It catalyses the reaction L-glutamate 5-semialdehyde + phosphate + NADP(+) = L-glutamyl 5-phosphate + NADPH + H(+). Its pathway is amino-acid biosynthesis; L-proline biosynthesis; L-glutamate 5-semialdehyde from L-glutamate: step 2/2. Its function is as follows. Catalyzes the NADPH-dependent reduction of L-glutamate 5-phosphate into L-glutamate 5-semialdehyde and phosphate. The product spontaneously undergoes cyclization to form 1-pyrroline-5-carboxylate. The protein is Gamma-glutamyl phosphate reductase of Methylobacterium sp. (strain 4-46).